Here is a 198-residue protein sequence, read N- to C-terminus: T-cell surface glycoprotein CD3 epsilon chain (198 aa).

The N-terminal stretch at 1–21 (MQSGTRWRVLGLCLLSIGVWG) is a signal peptide. Topologically, residues 22 to 117 (QDGNEEMGSI…RVCENCMEMD (96 aa)) are extracellular. Residues 37–107 (QVSISGTTVI…DASHHLYLKA (71 aa)) enclose the Ig-like domain. Cysteines 49 and 89 form a disulfide. Residues 118-138 (VMAVATIVIVDICITLGLLLL) form a helical membrane-spanning segment. Residues 139–198 (VYYWSKNRKAKAKPVTRGAGAGGRQRGQNKERPPPVPNPDYEPIRKGQQDLYSGLNQRRI) lie on the Cytoplasmic side of the membrane. Residues 152–198 (PVTRGAGAGGRQRGQNKERPPPVPNPDYEPIRKGQQDLYSGLNQRRI) form a disordered region. The NUMB-binding region stretch occupies residues 166-183 (QNKERPPPVPNPDYEPIR). One can recognise an ITAM domain in the interval 169–196 (ERPPPVPNPDYEPIRKGQQDLYSGLNQR). Positions 170-177 (RPPPVPNP) are proline-rich sequence. 2 positions are modified to phosphotyrosine: Tyr179 and Tyr190. Positions 188–198 (DLYSGLNQRRI) are enriched in polar residues.

The TCR-CD3 complex is composed of a CD3D/CD3E and a CD3G/CD3E heterodimers that preferentially associate with TCRalpha and TCRbeta, respectively, to form TCRalpha/CD3E/CD3G and TCRbeta/CD3G/CD3E trimers. In turn, the hexamer interacts with CD3Z homodimer to form the TCR-CD3 complex. Alternatively, TCRalpha and TCRbeta can be replaced by TCRgamma and TCRdelta. Interacts with CD6. Interacts (via Proline-rich sequence) with NCK1; the interaction is ligand dependent but independent of tyrosine kinase activation. In terms of processing, phosphorylated on Tyr residues after T-cell receptor triggering by LCK in association with CD4/CD8.

Its subcellular location is the cell membrane. Its function is as follows. Part of the TCR-CD3 complex present on T-lymphocyte cell surface that plays an essential role in adaptive immune response. When antigen presenting cells (APCs) activate T-cell receptor (TCR), TCR-mediated signals are transmitted across the cell membrane by the CD3 chains CD3D, CD3E, CD3G and CD3Z. All CD3 chains contain immunoreceptor tyrosine-based activation motifs (ITAMs) in their cytoplasmic domain. Upon TCR engagement, these motifs become phosphorylated by Src family protein tyrosine kinases LCK and FYN, resulting in the activation of downstream signaling pathways. In addition of this role of signal transduction in T-cell activation, CD3E plays an essential role in correct T-cell development. Also participates in internalization and cell surface down-regulation of TCR-CD3 complexes via endocytosis sequences present in CD3E cytosolic region. In addition to its role as a TCR coreceptor, it serves as a receptor for ITPRIPL1. Ligand recognition inhibits T-cell activation by promoting interaction with NCK1, which prevents CD3E-ZAP70 interaction and blocks the ERK-NFkB signaling cascade and calcium influx. The protein is T-cell surface glycoprotein CD3 epsilon chain (CD3E) of Macaca fascicularis (Crab-eating macaque).